The primary structure comprises 181 residues: Adenine phosphoribosyltransferase (181 aa).

It belongs to the purine/pyrimidine phosphoribosyltransferase family. As to quaternary structure, homodimer.

It localises to the cytoplasm. It carries out the reaction AMP + diphosphate = 5-phospho-alpha-D-ribose 1-diphosphate + adenine. It participates in purine metabolism; AMP biosynthesis via salvage pathway; AMP from adenine: step 1/1. In terms of biological role, catalyzes a salvage reaction resulting in the formation of AMP, that is energically less costly than de novo synthesis. The sequence is that of Adenine phosphoribosyltransferase from Mesorhizobium japonicum (strain LMG 29417 / CECT 9101 / MAFF 303099) (Mesorhizobium loti (strain MAFF 303099)).